Consider the following 175-residue polypeptide: Bifunctional protein PyrR (175 aa).

Substrate contacts are provided by residues 40-41 (TR), 102-110 (DDVLYTGRT), Arg-135, and Val-159. Residues 98 to 110 (VIIIDDVLYTGRT) carry the PRPP-binding motif.

This sequence belongs to the purine/pyrimidine phosphoribosyltransferase family. PyrR subfamily. Homodimer and homohexamer; in equilibrium.

It catalyses the reaction UMP + diphosphate = 5-phospho-alpha-D-ribose 1-diphosphate + uracil. In terms of biological role, regulates transcriptional attenuation of the pyrimidine nucleotide (pyr) operon by binding in a uridine-dependent manner to specific sites on pyr mRNA. This disrupts an antiterminator hairpin in the RNA and favors formation of a downstream transcription terminator, leading to a reduced expression of downstream genes. Its function is as follows. Also displays a weak uracil phosphoribosyltransferase activity which is not physiologically significant. In Staphylococcus haemolyticus (strain JCSC1435), this protein is Bifunctional protein PyrR.